The chain runs to 99 residues: Ubiquitin-related modifier 1 (99 aa).

At G99 the chain carries 1-thioglycine. A Glycyl lysine isopeptide (Gly-Lys) (interchain with K-? in acceptor proteins) cross-link involves residue G99.

The protein belongs to the URM1 family. In terms of assembly, homodimer; homodimerization may provide an autoprotection to the highly active C-terminal residue before attacking its substrates. Interacts with NCS2 and NCS6. Forms a conjugate with the target protein AHP1. Post-translationally, C-terminal thiocarboxylation occurs in 2 steps, it is first acyl-adenylated (-COAMP) via the hesA/moeB/thiF part of UBA4, then thiocarboxylated (-COSH) via the rhodanese domain of UBA4.

The protein resides in the cytoplasm. It is found in the nucleus. Its pathway is tRNA modification; 5-methoxycarbonylmethyl-2-thiouridine-tRNA biosynthesis. Its function is as follows. Acts as a sulfur carrier required for 2-thiolation of mcm(5)S(2)U at tRNA wobble positions of cytosolic tRNA(Lys), tRNA(Glu) and tRNA(Gln). Serves as sulfur donor in tRNA 2-thiolation reaction by being thiocarboxylated (-COSH) at its C-terminus by the MOCS3 homolog UBA4. The sulfur is then transferred to tRNA to form 2-thiolation of mcm(5)S(2)U. Prior mcm(5) tRNA modification by the elongator complex is required for 2-thiolation. Also acts as a ubiquitin-like protein (UBL) that is covalently conjugated via an isopeptide bond to lysine residues of target proteins such as AHP1. The thiocarboxylated form serves as substrate for conjugation and oxidative stress specifically induces the formation of UBL-protein conjugates. This Saccharomyces cerevisiae (strain RM11-1a) (Baker's yeast) protein is Ubiquitin-related modifier 1.